A 180-amino-acid polypeptide reads, in one-letter code: Immediate early response gene 2 protein (180 aa).

Positions 53–135 (MSEKSGQSVT…KRRSKTATDS (83 aa)) are disordered. A compositionally biased stretch (polar residues) spans 56–92 (KSGQSVTEECTSHTQEPMDTSSSTATPLRETSGQSSE). Positions 93–103 (DGQRSGLEGHP) are enriched in basic and acidic residues.

The protein belongs to the IER family. In terms of assembly, interacts with FIBPB.

Its subcellular location is the nucleus. It is found in the cytoplasm. DNA-binding protein that seems to act as a transcription factor. Mediates with FIBPB FGF-signaling in Kupffer's vesicle ciliogenesis and in the establishment of laterality in the embryo. This chain is Immediate early response gene 2 protein, found in Danio rerio (Zebrafish).